The primary structure comprises 87 residues: Keratin-associated protein 19-3 (87 aa).

The segment at 9-82 (GGLGYGYGSF…RRPSCCGGYG (74 aa)) is 23 X 2 AA repeats of G-[YCGS].

The protein belongs to the KRTAP type 19 family. Interacts with hair keratins. In terms of tissue distribution, strong expression in narrowly defined pattern restricted to the lower and middle cortical regions of the hair shaft in both developing and cycling hair. During hair follicle regression (catagen), expression levels decrease until expression is no longer detectable in follicles at resting stage (telogen).

In the hair cortex, hair keratin intermediate filaments are embedded in an interfilamentous matrix, consisting of hair keratin-associated proteins (KRTAP), which are essential for the formation of a rigid and resistant hair shaft through their extensive disulfide bond cross-linking with abundant cysteine residues of hair keratins. The matrix proteins include the high-sulfur and high-glycine-tyrosine keratins. This Mus musculus (Mouse) protein is Keratin-associated protein 19-3 (Krtap19-3).